A 115-amino-acid polypeptide reads, in one-letter code: Tyrosine-protein phosphatase 18 (115 aa).

The Tyrosine-protein phosphatase domain maps to 1–115 (WLMIVEQKCR…ETGSDAPMVV (115 aa)). Aspartate 83 serves as a coordination point for substrate.

This sequence belongs to the protein-tyrosine phosphatase family.

The enzyme catalyses O-phospho-L-tyrosyl-[protein] + H2O = L-tyrosyl-[protein] + phosphate. The chain is Tyrosine-protein phosphatase 18 (STY-18) from Styela plicata (Wrinkled sea squirt).